We begin with the raw amino-acid sequence, 629 residues long: Microtubule-associated protein 70-3 (629 aa).

The interval 1–54 (MEEGGYAFEVNNGRPTASEFGTTARISSPSLTMSSSFREGGGGGGSKGLTRRRS) is disordered. The segment covering 13–33 (GRPTASEFGTTARISSPSLTM) has biased composition (polar residues). Residues 75–375 (VKVELNRLEN…ADRAAKSEAQ (301 aa)) adopt a coiled-coil conformation. Residues 257-493 (ILDKLHRQKV…FPLNQSSEGT (237 aa)) form a required for targeting to microtubules region. Disordered stretches follow at residues 391 to 421 (LRGP…LGGA), 458 to 519 (GTSR…DSVP), and 578 to 629 (AMEK…RSTQ). Over residues 393-416 (GPSSSGNRSTPEGRSMSNGPSRRQ) the composition is skewed to polar residues. Residues 544 to 592 (LRDKDEAIEMLAKKVETLTKAMEVEAKKMRREVAAMEKEVSAMRVDNKG) are a coiled coil. Residues 578-596 (AMEKEVSAMRVDNKGSDSR) are compositionally biased toward basic and acidic residues. The span at 603 to 613 (NSKGASTTAQL) shows a compositional bias: polar residues.

The protein belongs to the MAP70 family.

It localises to the cytoplasm. It is found in the cytoskeleton. Its function is as follows. Plant-specific protein that interact with microtubules. The polypeptide is Microtubule-associated protein 70-3 (MAP70.3) (Arabidopsis thaliana (Mouse-ear cress)).